The sequence spans 493 residues: Voltage-gated potassium channel regulatory subunit KCNF1 (493 aa).

Residues 1–183 are Cytoplasmic-facing; sequence MDASAEQSLP…KPESSCPARV (183 aa). The chain crosses the membrane as a helical span at residues 184–204; it reads VAVLSFLLILVSSVVMCMGTI. A helical membrane pass occupies residues 224–244; sequence NVETACIGWFTLEYLLRLFSS. Over 245–249 the chain is Cytoplasmic; it reads PNKLH. A helical transmembrane segment spans residues 250–270; sequence FALSFMNIVDVLAILPFYVSL. The helical; Voltage-sensor transmembrane segment at 290–310 threads the bilayer; that stretch reads QALRIMRIARIFKLARHSSGL. The Cytoplasmic segment spans residues 311 to 324; that stretch reads QTLTYALKRSFKEL. The helical transmembrane segment at 325 to 345 threads the bilayer; it reads GLLLMYLAVGIFVFSALGYTM. Residues 358–378 constitute an intramembrane region (pore-forming); it reads PQSFWWAIITMTTVGYGDIYP. The short motif at 370-375 is the Selectivity filter element; sequence TVGYGD. The helical transmembrane segment at 386 to 406 threads the bilayer; the sequence is NAAISFLCGVIAIALPIHPII. At 407–493 the chain is on the cytoplasmic side; it reads NNFVRYYNKQ…HHRTRLQSCK (87 aa). The tract at residues 434-468 is disordered; the sequence is SSSAEGKPGGSRSDLDTLPPEPAAREGPSWGSRLK.

Belongs to the potassium channel family. F (TC 1.A.1.2) subfamily. Kv5.1/KCNF1 sub-subfamily. As to quaternary structure, heterotetramer with KCNB1 or KCNB2.

Its subcellular location is the cell membrane. In terms of biological role, regulatory alpha-subunit of the voltage-gated potassium (Kv) channel which, when coassembled with KCNB1 or KCNB2, can modulate their expression and their gating kinetics by acting on deactivation upon repolarization and inactivation during maintained depolarization. Accelerates inactivation but has relatively little effect on deactivation. Coexpression with KCNB1 or KCNB2 markedly slows inactivation. Each modulatory subunit has its own specific properties of regulation, and can lead to extensive inhibitions, to large changes in kinetics, and/or to large shifts in the voltage dependencies of the inactivation process. The gating kinetics depends on the nature and stoichiometry of the associated regulatory sunbunit. Fails to produce a potassium current when expressed alone. This chain is Voltage-gated potassium channel regulatory subunit KCNF1, found in Mus musculus (Mouse).